We begin with the raw amino-acid sequence, 468 residues long: Ubiquinone biosynthesis monooxygenase COQ6, mitochondrial (468 aa).

The transit peptide at 1–28 directs the protein to the mitochondrion; it reads MAARLVSRCGAVRAAPHSGPLVSWRRWS.

The protein belongs to the UbiH/COQ6 family. As to quaternary structure, component of a multi-subunit COQ enzyme complex, composed of at least COQ3, COQ4, COQ5, COQ6, COQ7 and COQ9. Interacts with COQ8B and COQ7. It depends on FAD as a cofactor. Widely expressed.

The protein localises to the mitochondrion inner membrane. Its subcellular location is the golgi apparatus. The protein resides in the cell projection. The enzyme catalyses 4-hydroxy-3-(all-trans-decaprenyl)benzoate + 2 reduced [2Fe-2S]-[ferredoxin] + O2 + 2 H(+) = 3,4-dihydroxy-5-(all-trans-decaprenyl)benzoate + 2 oxidized [2Fe-2S]-[ferredoxin] + H2O. It catalyses the reaction 2-methoxy-6-(all-trans-decaprenyl)phenol + 2 reduced [2Fe-2S]-[ferredoxin] + O2 + 2 H(+) = 2-methoxy-6-(all-trans-decaprenyl)benzene-1,4-diol + 2 oxidized [2Fe-2S]-[ferredoxin] + H2O. Its pathway is cofactor biosynthesis; ubiquinone biosynthesis. Its function is as follows. FAD-dependent monooxygenase required for two non-consecutive steps during ubiquinone biosynthesis. Required for the C5-ring hydroxylation during ubiquinone biosynthesis by catalyzing the hydroxylation of 4-hydroxy-3-(all-trans-decaprenyl)benzoic acid to 3,4-dihydroxy-5-(all-trans-decaprenyl)benzoic acid. Also acts downstream of COQ4, for the C1-hydroxylation during ubiquinone biosynthesis by catalyzing the hydroxylation of 2-methoxy-6-(all-trans-decaprenyl)phenol to 2-methoxy-6-(all-trans-decaprenyl)benzene-1,4-diol. The electrons required for the hydroxylation reaction are funneled indirectly to COQ6 from NADPH via a ferredoxin/ferredoxin reductase system composed of FDX2 and FDXR. This is Ubiquinone biosynthesis monooxygenase COQ6, mitochondrial from Homo sapiens (Human).